A 195-amino-acid polypeptide reads, in one-letter code: Nucleoside-triphosphatase THEP1 (195 aa).

ATP is bound by residues Gly-11–Ser-18 and Val-103–Gly-110.

The protein belongs to the THEP1 NTPase family.

The catalysed reaction is a ribonucleoside 5'-triphosphate + H2O = a ribonucleoside 5'-diphosphate + phosphate + H(+). Its function is as follows. Has nucleotide phosphatase activity towards ATP, GTP, CTP, TTP and UTP. May hydrolyze nucleoside diphosphates with lower efficiency. In Korarchaeum cryptofilum (strain OPF8), this protein is Nucleoside-triphosphatase THEP1.